The primary structure comprises 257 residues: MEHDDRRASQVRAGNNRVVIRVEQIENNAVHEQEGSTTIASQPVTATHAAPVSMAHLEQFTDSDWVEPSDEPTGTAVFDATGDQAAMPSWDELVRQHADRVYRLAYRLSGNQHDAEDLTQETFIRVFRSVQNYQPGTFEGWLHRITTNLFLDMVRRRGRIRMEALPEDYDRVPAEDPNPEQIYHDSRLGADLQAALDSLPPEFRAAVVLCDIEGLSYEEIGATLGVKLGTVRSRIHRGRQQLRDYLAKHSSETAQSA.

The segment at 87-153 (MPSWDELVRQ…RITTNLFLDM (67 aa)) is sigma-70 factor domain-2. The Polymerase core binding signature appears at 111-114 (NQHD). Residues 186–236 (SRLGADLQAALDSLPPEFRAAVVLCDIEGLSYEEIGATLGVKLGTVRSRIH) are sigma-70 factor domain-4. The H-T-H motif DNA-binding region spans 211-230 (DIEGLSYEEIGATLGVKLGT).

It belongs to the sigma-70 factor family. ECF subfamily. In terms of assembly, interacts transiently with the RNA polymerase catalytic core formed by RpoA, RpoB, RpoC and RpoZ (2 alpha, 1 beta, 1 beta' and 1 omega subunit) to form the RNA polymerase holoenzyme that can initiate transcription. Interacts (via sigma-70 factor domain 4) with RseA; interaction is abrogated by treatment of cells with H(2)O(2) or detergent.

In terms of biological role, sigma factors are initiation factors that promote the attachment of RNA polymerase to specific initiation sites and are then released. Extracytoplasmic function (ECF) sigma factors are held in an inactive form by an anti-sigma factor until released. The polypeptide is ECF RNA polymerase sigma factor SigE (sigE) (Mycolicibacterium smegmatis (strain ATCC 700084 / mc(2)155) (Mycobacterium smegmatis)).